The following is a 378-amino-acid chain: Chorismate synthase (378 aa).

Residues R48 and R54 each coordinate NADP(+). Residues 125 to 127 (RSS), 238 to 239 (NA), G278, 293 to 297 (KPTSS), and R319 each bind FMN.

Belongs to the chorismate synthase family. As to quaternary structure, homotetramer. It depends on FMNH2 as a cofactor.

The catalysed reaction is 5-O-(1-carboxyvinyl)-3-phosphoshikimate = chorismate + phosphate. It participates in metabolic intermediate biosynthesis; chorismate biosynthesis; chorismate from D-erythrose 4-phosphate and phosphoenolpyruvate: step 7/7. In terms of biological role, catalyzes the anti-1,4-elimination of the C-3 phosphate and the C-6 proR hydrogen from 5-enolpyruvylshikimate-3-phosphate (EPSP) to yield chorismate, which is the branch point compound that serves as the starting substrate for the three terminal pathways of aromatic amino acid biosynthesis. This reaction introduces a second double bond into the aromatic ring system. This Azoarcus sp. (strain BH72) protein is Chorismate synthase.